A 225-amino-acid chain; its full sequence is Insulin-induced gene 2 protein (225 aa).

Over 1-28 (MAEGETKSPGPKKCGPYISSVTSQSVNL) the chain is Cytoplasmic. The chain crosses the membrane as a helical span at residues 29–51 (MIRGVVLFFIGVFLALVLNLLQI). Over 52–70 (QRNVTLFPPDVIASIFSSA) the chain is Lumenal. Residues 71–88 (WWVPPCCGTASAVIGLLY) form a helical membrane-spanning segment. The Cytoplasmic portion of the chain corresponds to 89–103 (PCIDRHLGEPHKFKR). A helical membrane pass occupies residues 104-126 (EWSSVMRCVAVFVGINHASAKVD). At 127 to 129 (FDN) the chain is on the lumenal side. The helical transmembrane segment at 130–148 (NIQLSLTLAALSIGLWWTF) threads the bilayer. At 149–153 (DRSRS) the chain is on the cytoplasmic side. S151 bears the Phosphoserine mark. Residues 154 to 175 (GFGLGVGIAFLATVVTQLLVYN) form a helical membrane-spanning segment. At 176–189 (GVYQYTSPDFLYVR) the chain is on the lumenal side. Residues 190–207 (SWLPCIFFAGGITMGNIG) traverse the membrane as a helical segment. Topologically, residues 208–225 (RQLAMYECKVIAEKSHQE) are cytoplasmic. C215 carries the cysteine sulfenic acid (-SOH); alternate modification. C215 is covalently cross-linked (Glycyl cysteine thioester (Cys-Gly) (interchain with G-Cter in ubiquitin); alternate). The KxHxx motif lies at 219-225 (AEKSHQE).

It belongs to the INSIG family. Interacts with SCAP; interaction is direct and only takes place in the presence of sterols; it prevents interaction between SCAP and the coat protein complex II (COPII). Associates with the SCAP-SREBP complex (composed of SCAP and SREBF1/SREBP1 or SREBF2/SREBP2); association is mediated via its interaction with SCAP and only takes place in the presence of sterols. Interacts with RNF139. Interacts with RNF145. Phosphorylation at Ser-151 by PCK1 reduces binding to oxysterol, disrupting the interaction between INSIG2 and SCAP, thereby promoting nuclear translocation of SREBP proteins (SREBF1/SREBP1 or SREBF2/SREBP2) and subsequent transcription of downstream lipogenesis-related genes. Post-translationally, polyubiquitinated by AMFR/gp78 at Cys-215 in some tissues such as adipose tissues, undifferentiated myoblasts and liver, leading to its degradation. In differentiated myotubes, Cys-215 oxidation prevents ubiquitination at the same site, resulting in protein stabilization. In terms of processing, oxidized at Cys-215 in differentiated myotubes, preventing ubiquitination at the same site, and resulting in protein stabilization.

The protein resides in the endoplasmic reticulum membrane. Its function is as follows. Oxysterol-binding protein that mediates feedback control of cholesterol synthesis by controlling both endoplasmic reticulum to Golgi transport of SCAP and degradation of HMGCR. Acts as a negative regulator of cholesterol biosynthesis by mediating the retention of the SCAP-SREBP complex in the endoplasmic reticulum, thereby blocking the processing of sterol regulatory element-binding proteins (SREBPs) SREBF1/SREBP1 and SREBF2/SREBP2. Binds oxysterol, including 22-hydroxycholesterol, 24-hydroxycholesterol, 25-hydroxycholesterol and 27-hydroxycholesterol, regulating interaction with SCAP and retention of the SCAP-SREBP complex in the endoplasmic reticulum. In presence of oxysterol, interacts with SCAP, retaining the SCAP-SREBP complex in the endoplasmic reticulum, thereby preventing SCAP from escorting SREBF1/SREBP1 and SREBF2/SREBP2 to the Golgi. Sterol deprivation or phosphorylation by PCK1 reduce oxysterol-binding, disrupting the interaction between INSIG2 and SCAP, thereby promoting Golgi transport of the SCAP-SREBP complex, followed by processing and nuclear translocation of SREBF1/SREBP1 and SREBF2/SREBP2. Also regulates cholesterol synthesis by regulating degradation of HMGCR: initiates the sterol-mediated ubiquitin-mediated endoplasmic reticulum-associated degradation (ERAD) of HMGCR via recruitment of the reductase to the ubiquitin ligase RNF139. The sequence is that of Insulin-induced gene 2 protein from Pongo abelii (Sumatran orangutan).